The chain runs to 89 residues: MAHKKAGGSSRNGRDSIGRRLGVKKYGGEAVGAGNILVRQRGTKFWPGEGVGMGKDHTIFATVDGAVKFHKGLKKRTFISVLPVAEAAE.

The disordered stretch occupies residues 1 to 20; the sequence is MAHKKAGGSSRNGRDSIGRR.

The protein belongs to the bacterial ribosomal protein bL27 family.

The protein is Large ribosomal subunit protein bL27 of Ruegeria pomeroyi (strain ATCC 700808 / DSM 15171 / DSS-3) (Silicibacter pomeroyi).